Reading from the N-terminus, the 318-residue chain is MANEMEFEKPILELKSKIADLKEYNETSDVDLTNEIEKLEKRLAKLESSIYSNMTAWDKFQVARHPERPTTLDYISLLFEDFMELHGDRAFGDDAAIVGGIATFHGIPVTVIGHQRGKDTKDNLHRNFGMPHPEGFRKALRLMKQADKFGRPIICFIDTKGAYPGRAAEERGQSEAIARNLYEMSDMKVPIISIVIGEGGSGGALALGVGNQIFMLENAVFSVISPEGAAAILWKDASQAKKAAESMRITAGDLFELGITDGIIPEVKGGAHRDLNAQAEEINKTITKSLHALMAFSEEQLIEQRYEKFKKIGVYDTL.

In terms of domain architecture, CoA carboxyltransferase C-terminal spans 38-292 (KLEKRLAKLE…NKTITKSLHA (255 aa)).

It belongs to the AccA family. Acetyl-CoA carboxylase is a heterohexamer composed of biotin carboxyl carrier protein (AccB), biotin carboxylase (AccC) and two subunits each of ACCase subunit alpha (AccA) and ACCase subunit beta (AccD).

The protein resides in the cytoplasm. It carries out the reaction N(6)-carboxybiotinyl-L-lysyl-[protein] + acetyl-CoA = N(6)-biotinyl-L-lysyl-[protein] + malonyl-CoA. The protein operates within lipid metabolism; malonyl-CoA biosynthesis; malonyl-CoA from acetyl-CoA: step 1/1. Functionally, component of the acetyl coenzyme A carboxylase (ACC) complex. First, biotin carboxylase catalyzes the carboxylation of biotin on its carrier protein (BCCP) and then the CO(2) group is transferred by the carboxyltransferase to acetyl-CoA to form malonyl-CoA. The sequence is that of Acetyl-coenzyme A carboxylase carboxyl transferase subunit alpha from Listeria monocytogenes serotype 4b (strain CLIP80459).